A 337-amino-acid chain; its full sequence is Anthranilate phosphoribosyltransferase (337 aa).

Residues Gly81, 84–85, Ser89, 91–94, 109–117, and Ala121 each bind 5-phospho-alpha-D-ribose 1-diphosphate; these read GD, NVST, and KHGNRAASS. Gly81 provides a ligand contact to anthranilate. Residue Ser93 coordinates Mg(2+). Asn112 is a binding site for anthranilate. Residue Arg167 participates in anthranilate binding. Mg(2+)-binding residues include Asp226 and Glu227.

It belongs to the anthranilate phosphoribosyltransferase family. As to quaternary structure, homodimer. It depends on Mg(2+) as a cofactor.

It carries out the reaction N-(5-phospho-beta-D-ribosyl)anthranilate + diphosphate = 5-phospho-alpha-D-ribose 1-diphosphate + anthranilate. It participates in amino-acid biosynthesis; L-tryptophan biosynthesis; L-tryptophan from chorismate: step 2/5. Its function is as follows. Catalyzes the transfer of the phosphoribosyl group of 5-phosphorylribose-1-pyrophosphate (PRPP) to anthranilate to yield N-(5'-phosphoribosyl)-anthranilate (PRA). This Methylobacterium sp. (strain 4-46) protein is Anthranilate phosphoribosyltransferase.